Here is a 908-residue protein sequence, read N- to C-terminus: DNA mismatch repair protein MutS (908 aa).

629-636 (GPNMAGKS) is a binding site for ATP. Residues 822–863 (ADEADGAPSEDPPSEDPPSGDGVRAKKGEADAVPDLEDSQAN) are disordered.

Belongs to the DNA mismatch repair MutS family.

This protein is involved in the repair of mismatches in DNA. It is possible that it carries out the mismatch recognition step. This protein has a weak ATPase activity. This chain is DNA mismatch repair protein MutS, found in Salinibacter ruber (strain DSM 13855 / M31).